The sequence spans 1122 residues: MKKLIFKLSVGITPLALIGLGSFGLAVSGAKPNNLKPVNQVGEMNSQGQSNLLEKARRWRNSNFTSLSIDGTNPGALVLTGSKSISRIDLYGNVIWTFDPGNTNDLTGKVGFYDANNKLTAFSGDVSFNVSDLSSKTVVEATQDQEDPNVFYLLLMPDAAVQQEQKTKDQVFENYFMSDAPAAGDTSAEGSATPAGGGSGSSAAGGGAVAPAAASSTARLVEEGNSAGMGTMTPTASTSETVIDYNSDQNKIPKPKTLLDSSESSESINGGRTYANINTQKNLQGVIVKVNENLFNSENPFAVENMAFIKPKDMVDNYPSTWTQGSANGKMTNVLQFYKHDNPNAVNNRFYRAKYYPKRLETQTTTPLIDSSFSPYEHPEWYEGNQFVMPWMQYITNLGGLYAKDGMVYLFGGNGTWVNNESALSIGVFRTKFENRTAEAPGNTKTVGYPYGILLSAISFDATRNGLALAAPALGQDVGYHFVPRLAVGGVSSPRGANGNIFLGSAITWGTNGGNFLDTKWHSPAVIEDAPTTFITVNSSGVLQNSGSQQSTSTPMPNSNGNESIPYRWTNSYDYNSVRFAALISKPAGGNTKQVESLFTTALKLDTLNSLPNKFTQENNIFFSYAMLDGRQWSLGTRKDSTWLTTNTINNFTYNTQQQLASTAAGENANPRNILNALTTAKGFDRRDIGNVDILYSNNTNKFTYYYQVGGAITTWPEVQVNYKTSANITYYNLTRTDFGSTTPATQDANTVSSKLNGAYLSSTGDQQGWYNGSIYVKKASFTPSSQGYTWQDFKGLTTTASNAVISNWTKAGYSIRPDDDTVFSVSKIPFEKEITAAVNVRSLDSYYVQLNGETSVNTVARVSPDSSALTLNPKRITNPLMNRDNVIGQGAFISRNDIPSSFFENKINDIVTTEADGTEVLDSKYINSIYRYTPPQNNPHIRLRLLVIDRSRATNDFIKLLPQVLVDGEYVAVPQANSVFVSDQEFTGFDALPGYVLPVAISIPIIIIALALALGLGIGIPMSQNRKMLKQGFAISNKKVDILTTAVGSVFKQIINRTSVTNIKKTPQMLQANKKDGASSPSKPSAPAAKKPTGPTKPSAPGAKPTAPAKPKAPAPTKKIE.

An N-terminal signal peptide occupies residues 1 to 30 (MKKLIFKLSVGITPLALIGLGSFGLAVSGA). Disordered stretches follow at residues 183–209 (AGDT…GGAV), 244–273 (DYNS…GGRT), and 544–563 (QNSG…NGNE). Over residues 195-208 (AGGGSGSSAAGGGA) the composition is skewed to gly residues. A compositionally biased stretch (polar residues) spans 259–273 (LDSSESSESINGGRT). A helical membrane pass occupies residues 997–1021 (VLPVAISIPIIIIALALALGLGIGI). The disordered stretch occupies residues 1066–1122 (KTPQMLQANKKDGASSPSKPSAPAAKKPTGPTKPSAPGAKPTAPAKPKAPAPTKKIE). Over residues 1079–1122 (ASSPSKPSAPAAKKPTGPTKPSAPGAKPTAPAKPKAPAPTKKIE) the composition is skewed to low complexity.

Belongs to the adhesin P1 family.

It localises to the cell membrane. Its function is as follows. Could be involved in cytadherence. The chain is Adhesin P1 (gapA) from Mycoplasmoides gallisepticum (Mycoplasma gallisepticum).